A 208-amino-acid polypeptide reads, in one-letter code: MARYNESVCRLCRRENLKMYLKGDRCYTDKCAIERRPYPPGQHGQGRVKFSEYGVQLREKQKVKRMYGLLEAGFRHAYQNAAAAKGKTGENLLQTLELRLDNVVFRLGFADTRNEARQLVRHGHFKVNGRKVNIPSYLCRAGDKVELRDRSRKVVRISEALEAVDRRGVPGWLELDKGGFKGTVRTQPSREDITMPIQEQLIVELYSK.

The 64-residue stretch at 98–161 (LRLDNVVFRL…RKVVRISEAL (64 aa)) folds into the S4 RNA-binding domain.

Belongs to the universal ribosomal protein uS4 family. As to quaternary structure, part of the 30S ribosomal subunit. Contacts protein S5. The interaction surface between S4 and S5 is involved in control of translational fidelity.

In terms of biological role, one of the primary rRNA binding proteins, it binds directly to 16S rRNA where it nucleates assembly of the body of the 30S subunit. With S5 and S12 plays an important role in translational accuracy. The sequence is that of Small ribosomal subunit protein uS4 from Anaeromyxobacter sp. (strain Fw109-5).